The sequence spans 439 residues: Hydroxyornithine transacylase SID3 (439 aa).

Residues 437 to 439 (SKL) carry the PTS1-type peroxisomal targeting signal motif.

This sequence belongs to the lysine N-acyltransferase mbtK family.

It localises to the peroxisome. The protein operates within siderophore biosynthesis. Functionally, hydroxyornithine transacylase; part of the gene cluster that mediates the biosynthesis of hydroxamate-containing siderophores that play a critical role in virulence via intracellular iron acquisition during macrophage infection. The sequence is that of Hydroxyornithine transacylase SID3 from Ajellomyces capsulatus (Darling's disease fungus).